We begin with the raw amino-acid sequence, 115 residues long: Meiotically up-regulated gene 168 protein (115 aa).

The disordered stretch occupies residues 82–115; that stretch reads SVSPVHTKAEEPGLGLTPMNSADFSNKIASRYRS. Polar residues predominate over residues 99–109; the sequence is PMNSADFSNKI.

It is found in the nucleus. Its function is as follows. Has a role in meiosis. This is Meiotically up-regulated gene 168 protein (mug168) from Schizosaccharomyces pombe (strain 972 / ATCC 24843) (Fission yeast).